A 370-amino-acid polypeptide reads, in one-letter code: Quinolinate synthase (370 aa).

Iminosuccinate is bound by residues His62 and Ser83. Cys128 lines the [4Fe-4S] cluster pocket. Iminosuccinate-binding positions include 154–156 and Ser171; that span reads YAN. [4Fe-4S] cluster is bound at residue Cys215. Residues 241-243 and Thr258 contribute to the iminosuccinate site; that span reads HPE. Residue Cys312 participates in [4Fe-4S] cluster binding.

Belongs to the quinolinate synthase family. Type 1 subfamily. Requires [4Fe-4S] cluster as cofactor.

It is found in the cytoplasm. The enzyme catalyses iminosuccinate + dihydroxyacetone phosphate = quinolinate + phosphate + 2 H2O + H(+). It participates in cofactor biosynthesis; NAD(+) biosynthesis; quinolinate from iminoaspartate: step 1/1. Functionally, catalyzes the condensation of iminoaspartate with dihydroxyacetone phosphate to form quinolinate. In Neisseria gonorrhoeae (strain ATCC 700825 / FA 1090), this protein is Quinolinate synthase.